Reading from the N-terminus, the 324-residue chain is Pancreas transcription factor 1 subunit alpha (324 aa).

A bHLH domain is found at 160 to 212 (QLRQAANVRERRRMQSINDAFEGLRSHIPTLPYEKRLSKVDTLRLAIGYINFL). Residues 302 to 324 (DPRKLNSKSFDNIENEPPFEFVS) are disordered.

In terms of assembly, component of the pancreas transcription factor 1 complex (PTF1) which is composed of TCF3/p75, TCF12/p64 and PTF1A/p48. TCF3 is responsible for the nuclear import of the p48/p64 complex. Interacts with TCF3 and RBPSUH/RBP-Jkappa. In terms of tissue distribution, expressed in precursors of pancreatic islets, acini and ducts.

It is found in the nucleus. It localises to the cytoplasm. Transcription factor implicated in the cell fate determination in various organs. Binds to the E-box consensus sequence 5'-CANNTG-3'. Plays a role in early and late pancreas development and differentiation. Important for determining whether cells allocated to the pancreatic buds continue towards pancreatic organogenesis or revert back to duodenal fates. May be involved in the maintenance of exocrine pancreas-specific gene expression including ELA1 and amylase. Required for the formation of pancreatic acinar and ductal cells. Plays an important role in cerebellar development. Directly regulated by FOXN4 and RORC during retinal development, FOXN4-PTF1A pathway plays a central role in directing the differentiation of retinal progenitors towards horizontal and amacrine fates. The polypeptide is Pancreas transcription factor 1 subunit alpha (Ptf1a) (Mus musculus (Mouse)).